Consider the following 100-residue polypeptide: Small ubiquitin-related modifier 1 (100 aa).

Residues 1-12 (MSANQEEDKKPG) are compositionally biased toward basic and acidic residues. The interval 1-21 (MSANQEEDKKPGDGGAHINLK) is disordered. The 78-residue stretch at 16–93 (AHINLKVKGQ…IDAMLHQTGG (78 aa)) folds into the Ubiquitin-like domain. Gly93 participates in a covalent cross-link: Glycyl lysine isopeptide (Gly-Lys) (interchain with K-? in acceptor proteins).

It belongs to the ubiquitin family. SUMO subfamily. As to quaternary structure, interacts with SAE2, SCE1, SIZ1 and MMS21. Interacts with HSFA2. Covalently attached to ABI5, FLD, GTE3, HSFA2 and ICE1.

The protein localises to the nucleus. Its subcellular location is the cytoplasm. In terms of biological role, ubiquitin-like protein which can be covalently attached to target lysines as a monomer. Does not seem to be involved in protein degradation and may function as an antagonist of ubiquitin in the degradation process. Required for the massive protein sumoylation in the nucleus induced by heat shock and controlled by SIZ1. Involved in the regulation of the heat stress transcription factor HSFA2 in acquired thermotolerance. This chain is Small ubiquitin-related modifier 1, found in Arabidopsis thaliana (Mouse-ear cress).